Here is a 428-residue protein sequence, read N- to C-terminus: Small ribosomal subunit protein uS2m (428 aa).

Positions 30-50 (FLSQDNFTAPPPPPTNSKKQA) are disordered.

Belongs to the universal ribosomal protein uS2 family. In terms of assembly, component of the mitochondrial small ribosomal subunit (mt-SSU). Mature N.crassa 74S mitochondrial ribosomes consist of a small (37S) and a large (54S) subunit. The 37S small subunit contains a 16S ribosomal RNA (16S mt-rRNA) and 32 different proteins. The 54S large subunit contains a 23S rRNA (23S mt-rRNA) and 42 different proteins.

It is found in the mitochondrion. In terms of biological role, component of the mitochondrial ribosome (mitoribosome), a dedicated translation machinery responsible for the synthesis of mitochondrial genome-encoded proteins, including at least some of the essential transmembrane subunits of the mitochondrial respiratory chain. The mitoribosomes are attached to the mitochondrial inner membrane and translation products are cotranslationally integrated into the membrane. The polypeptide is Small ribosomal subunit protein uS2m (mrp4) (Neurospora crassa (strain ATCC 24698 / 74-OR23-1A / CBS 708.71 / DSM 1257 / FGSC 987)).